A 546-amino-acid polypeptide reads, in one-letter code: Probable protein kinase UbiB (546 aa).

Residues 124 to 502 form the Protein kinase domain; that stretch reads DFSVEPLASA…HVRQGQSRYL (379 aa). ATP contacts are provided by residues 130 to 138 and K153; that span reads LASASIAQV. D288 (proton acceptor) is an active-site residue. Helical transmembrane passes span 501–521 and 522–542; these read YLFGIGAVLLLSGTLLFIHRP and EWGMMPGWLMAGGVVTWLIGW.

This sequence belongs to the ABC1 family. UbiB subfamily.

The protein localises to the cell inner membrane. It functions in the pathway cofactor biosynthesis; ubiquinone biosynthesis [regulation]. Its function is as follows. Is probably a protein kinase regulator of UbiI activity which is involved in aerobic coenzyme Q (ubiquinone) biosynthesis. The sequence is that of Probable protein kinase UbiB from Klebsiella pneumoniae subsp. pneumoniae (strain ATCC 700721 / MGH 78578).